The primary structure comprises 88 residues: Small ribosomal subunit protein bS20 (88 aa).

The interval 1-20 (MANTKSARKSLIKSKQQRKC) is disordered.

It belongs to the bacterial ribosomal protein bS20 family.

Its function is as follows. Binds directly to 16S ribosomal RNA. The sequence is that of Small ribosomal subunit protein bS20 from Blochmanniella pennsylvanica (strain BPEN).